Reading from the N-terminus, the 107-residue chain is Replication initiation control protein YabA (107 aa).

His-81, Cys-83, Cys-97, and Cys-100 together coordinate Zn(2+).

The protein belongs to the YabA family. As to quaternary structure, homotetramer. Interacts with both DnaA and DnaN, acting as a bridge between these two proteins. Requires Zn(2+) as cofactor.

The protein resides in the cytoplasm. It is found in the nucleoid. Involved in control of chromosome replication initiation. Inhibits the cooperative binding of DnaA to the oriC region, thus negatively regulating initiation of chromosome replication. Inhibits the ability of DnaA-ATP to form a helix on DNA; does not disassemble preformed DnaA-DNA helices. Decreases the residence time of DnaA on the chromosome at its binding sites (oriC, replication forks and promoter-binding sites). Tethers DnaA to the replication machinery via the DNA polymerase beta sliding clamp subunit (dnaN). Associates with oriC and other DnaA targets on the chromosome in a DnaA-dependent manner. The sequence is that of Replication initiation control protein YabA from Streptococcus equi subsp. equi (strain 4047).